Consider the following 229-residue polypeptide: RNA pyrophosphohydrolase (229 aa).

A Nudix hydrolase domain is found at Gly6–Thr149. The Nudix box motif lies at Gly38–Gly59. A disordered region spans residues Ser168–Ala229.

Belongs to the Nudix hydrolase family. RppH subfamily. A divalent metal cation is required as a cofactor.

Accelerates the degradation of transcripts by removing pyrophosphate from the 5'-end of triphosphorylated RNA, leading to a more labile monophosphorylated state that can stimulate subsequent ribonuclease cleavage. This Delftia acidovorans (strain DSM 14801 / SPH-1) protein is RNA pyrophosphohydrolase.